We begin with the raw amino-acid sequence, 187 residues long: MNLTNHFLVAMPSMQDPHFKRGVVYVCEHNEEGAMGLVINLPIEISVGNMLEQIEVERDLPVNNPDSLTQSVLNGGPVSEDRGFVLHQPKGQFDSSICINDELSVTTSQDILPLLGTSEAPEKFIVALGYAGWSAGQLEQELAENSWLTMEADAEVIFETPINERWDTAVARLGINPANLSIEKGHA.

The protein belongs to the UPF0301 (AlgH) family.

This Photobacterium profundum (strain SS9) protein is UPF0301 protein PBPRA3139.